Reading from the N-terminus, the 250-residue chain is Bcl-2-like protein 12 (250 aa).

Residues 24 to 46 (GEAAGSPVPTPPRSPAQEEPTDF) are disordered. Residue serine 29 is modified to Phosphoserine. Threonine 33 is subject to Phosphothreonine. Serine 37 carries the post-translational modification Phosphoserine. The residue at position 60 (arginine 60) is an Omega-N-methylarginine. A phosphoserine mark is found at serine 111, serine 158, serine 159, serine 161, and serine 189. The BH2 motif lies at 227 to 238 (WIQAHGGWEGIL).

It belongs to the Bcl-2 family. As to expression, expressed mainly in breast, thymus, prostate, fetal liver, colon, placenta, pancreas, small intestine, spinal cord, kidney, and bone marrow and to a lesser extent in many other tissues. Isoform 2 is primarily expressed in skeletal muscle.

The polypeptide is Bcl-2-like protein 12 (Homo sapiens (Human)).